The primary structure comprises 501 residues: Carotenoid cleavage oxygenase (501 aa).

Fe cation-binding residues include His-162, His-211, His-314, and His-494.

It belongs to the carotenoid oxygenase family. Requires Fe(2+) as cofactor.

Its function is as follows. Catalyzes the oxidative cleavage of several carotenoids and apocarotenoids in vitro. This is Carotenoid cleavage oxygenase from Mycobacterium tuberculosis (strain CDC 1551 / Oshkosh).